The following is a 307-amino-acid chain: GTPase Era (307 aa).

Residues 7–181 (RCGWVALLGP…VKLVKSKLPV (175 aa)) enclose the Era-type G domain. The tract at residues 15–22 (GPPNAGKS) is G1. 15–22 (GPPNAGKS) provides a ligand contact to GTP. A G2 region spans residues 41 to 45 (QTTRN). A G3 region spans residues 62 to 65 (DTPG). GTP contacts are provided by residues 62–66 (DTPGI) and 130–133 (NKVD). Residues 130 to 133 (NKVD) form a G4 region. Residues 160-162 (VSA) are G5. Positions 212–290 (LRQELPYSVA…HLELWVKVRE (79 aa)) constitute a KH type-2 domain.

It belongs to the TRAFAC class TrmE-Era-EngA-EngB-Septin-like GTPase superfamily. Era GTPase family. In terms of assembly, monomer.

The protein resides in the cytoplasm. It is found in the cell inner membrane. An essential GTPase that binds both GDP and GTP, with rapid nucleotide exchange. Plays a role in 16S rRNA processing and 30S ribosomal subunit biogenesis and possibly also in cell cycle regulation and energy metabolism. The polypeptide is GTPase Era (Nitratidesulfovibrio vulgaris (strain DSM 19637 / Miyazaki F) (Desulfovibrio vulgaris)).